The following is a 428-amino-acid chain: Adenylosuccinate synthetase (428 aa).

GTP-binding positions include 13–19 (GDEGKGK) and 41–43 (GHT). Asp-14 serves as the catalytic Proton acceptor. Mg(2+)-binding residues include Asp-14 and Gly-41. IMP is bound by residues 14 to 17 (DEGK), 39 to 42 (NAGH), Thr-130, Arg-144, Gln-223, Thr-238, and Arg-302. The Proton donor role is filled by His-42. Position 298–304 (298–304 (ASTGRRR)) interacts with substrate. GTP is bound by residues Arg-304, 330 to 332 (KLD), and 412 to 414 (STG).

The protein belongs to the adenylosuccinate synthetase family. Homodimer. Requires Mg(2+) as cofactor.

The protein localises to the cytoplasm. The enzyme catalyses IMP + L-aspartate + GTP = N(6)-(1,2-dicarboxyethyl)-AMP + GDP + phosphate + 2 H(+). It participates in purine metabolism; AMP biosynthesis via de novo pathway; AMP from IMP: step 1/2. Functionally, plays an important role in the de novo pathway of purine nucleotide biosynthesis. Catalyzes the first committed step in the biosynthesis of AMP from IMP. The chain is Adenylosuccinate synthetase from Dichelobacter nodosus (strain VCS1703A).